The primary structure comprises 365 residues: MQTLKVDLGERSYPIYIGEGLLDQPELLAPHIAGRQVAIVSNETVAPLYLERLSKTLGAYSVLPVVLPDGEKYKNWETLQLVFDALLSARHDRRTTVVALGGGVIGDMAGFAAACYQRGVDFIQVPTTLLSQVDSSVGGKTGINHPLGKNMVGAFYQPNAVLIDTTSLKTLPQRELSAGLAEIIKYGLICDEPFLGWLEDNMQALRALEPVALTEAIRRSCAAKAAVVGADERESGVRATLNLGHTFGHAIETHMGYGVWLHGEAVAAGTVMALEMSMRLGWIDQPARDRGIRLLQDAGLPVVPPQEMTPAHFMEHMAVDKKVLDGRLRLVLLRQMGEAVVTDDYPKEILQATLAADYRAIVAQL.

Residues 69-74, 103-107, 127-128, lysine 140, and lysine 149 each bind NAD(+); these read DGEKYK, GVIGD, and TT. Residues glutamate 182, histidine 245, and histidine 262 each coordinate Zn(2+).

This sequence belongs to the sugar phosphate cyclases superfamily. Dehydroquinate synthase family. Requires Co(2+) as cofactor. The cofactor is Zn(2+). NAD(+) is required as a cofactor.

It localises to the cytoplasm. It catalyses the reaction 7-phospho-2-dehydro-3-deoxy-D-arabino-heptonate = 3-dehydroquinate + phosphate. Its pathway is metabolic intermediate biosynthesis; chorismate biosynthesis; chorismate from D-erythrose 4-phosphate and phosphoenolpyruvate: step 2/7. In terms of biological role, catalyzes the conversion of 3-deoxy-D-arabino-heptulosonate 7-phosphate (DAHP) to dehydroquinate (DHQ). The protein is 3-dehydroquinate synthase of Pseudomonas entomophila (strain L48).